A 406-amino-acid polypeptide reads, in one-letter code: Tryptophan synthase beta chain (406 aa).

Position 99 is an N6-(pyridoxal phosphate)lysine (Lys-99).

Belongs to the TrpB family. In terms of assembly, tetramer of two alpha and two beta chains. Pyridoxal 5'-phosphate is required as a cofactor.

It carries out the reaction (1S,2R)-1-C-(indol-3-yl)glycerol 3-phosphate + L-serine = D-glyceraldehyde 3-phosphate + L-tryptophan + H2O. It participates in amino-acid biosynthesis; L-tryptophan biosynthesis; L-tryptophan from chorismate: step 5/5. The beta subunit is responsible for the synthesis of L-tryptophan from indole and L-serine. The polypeptide is Tryptophan synthase beta chain (Brucella canis (strain ATCC 23365 / NCTC 10854 / RM-666)).